The sequence spans 619 residues: Putative zinc metalloprotease CT_072 (619 aa).

His-20 contributes to the Zn(2+) binding site. Residue Glu-21 is part of the active site. His-24 contributes to the Zn(2+) binding site. A run of 3 helical transmembrane segments spans residues 103–125, 558–580, and 593–610; these read IFVL…GILY, VLNL…WEIL, and ALVP…FLTL.

The protein belongs to the peptidase M50B family. Requires Zn(2+) as cofactor.

The protein resides in the cell inner membrane. The sequence is that of Putative zinc metalloprotease CT_072 from Chlamydia trachomatis serovar D (strain ATCC VR-885 / DSM 19411 / UW-3/Cx).